We begin with the raw amino-acid sequence, 504 residues long: MFGFDPSLITFTIYIFGMLLIGVLAYYYTNNLSDYILGGRRLGSFVTAMSAGASDMSGWLLMGLPGAVYLSGLVEGWIAIGLTIGAYFNWLLVAGRLRVYTELNNNALTLPEYFHNRFGSSHKLLKLVSATIILVFLTIYCASGVVAGAKLFQNIFSVEYSTALWYGAAATIAYTFIGGFLAVSWTDTIQATLMIFALILTPVFVLLSFADTAQFSAVLEQAEAAVNKDFTDLFTSTTPLGLLSLAAWGLGYFGQPHILARFMAADSVKSLIKARRISMGWMVLCLAGAIGIGLFAIPYFFANPAIAGTVNREPEQVFIELAKLLFNPWIAGILLSAILAAVMSTLSAQLLISSSSITEDFYKGFIRPNASEKELVWLGRIMVLVIAALAIWIAQDENSKVLKLVEFAWAGFGSAFGPVVLFSLFWKRMTSSGAMAGMLVGAVTVFAWKEVVPADTDWFKVYEMIPGFAFASLAIIVISLLSNKPEQDILNTFDKAEKAYKEAK.

Helical transmembrane passes span 8 to 28, 50 to 70, 73 to 93, 127 to 147, 163 to 183, 189 to 209, 240 to 260, 281 to 301, 324 to 344, 374 to 394, 405 to 425, 434 to 454, and 461 to 481; these read LITFTIYIFGMLLIGVLAYYY, SAGASDMSGWLLMGLPGAVYL, LVEGWIAIGLTIGAYFNWLLV, LVSATIILVFLTIYCASGVVA, ALWYGAAATIAYTFIGGFLAV, IQATLMIFALILTPVFVLLSF, LGLLSLAAWGLGYFGQPHILA, WMVLCLAGAIGIGLFAIPYFF, LLFNPWIAGILLSAILAAVMS, ELVWLGRIMVLVIAALAIWIA, VEFAWAGFGSAFGPVVLFSLF, AMAGMLVGAVTVFAWKEVVPA, and VYEMIPGFAFASLAIIVISLL.

It belongs to the sodium:solute symporter (SSF) (TC 2.A.21) family.

It is found in the cell inner membrane. It catalyses the reaction L-proline(in) + Na(+)(in) = L-proline(out) + Na(+)(out). Its function is as follows. Catalyzes the sodium-dependent uptake of extracellular L-proline. The protein is Sodium/proline symporter (putP) of Haemophilus influenzae (strain ATCC 51907 / DSM 11121 / KW20 / Rd).